Consider the following 431-residue polypeptide: GTPase Obg (431 aa).

One can recognise an Obg domain in the interval 1–158 (MFVDQVKVDV…LTIRMELKVL (158 aa)). The OBG-type G domain maps to 159-335 (ADVGLVGFPS…LLAKTADLLD (177 aa)). GTP-binding positions include 165 to 172 (GFPSVGKS), 190 to 194 (FTTLV), 212 to 215 (DLPG), 282 to 285 (TKMD), and 316 to 318 (SSI). Serine 172 and threonine 192 together coordinate Mg(2+). The OCT domain maps to 353-431 (YTTEADADFS…ILDYSFQFMD (79 aa)).

The protein belongs to the TRAFAC class OBG-HflX-like GTPase superfamily. OBG GTPase family. In terms of assembly, monomer. The cofactor is Mg(2+).

It localises to the cytoplasm. Its function is as follows. An essential GTPase which binds GTP, GDP and possibly (p)ppGpp with moderate affinity, with high nucleotide exchange rates and a fairly low GTP hydrolysis rate. Plays a role in control of the cell cycle, stress response, ribosome biogenesis and in those bacteria that undergo differentiation, in morphogenesis control. This Lactiplantibacillus plantarum (strain ATCC BAA-793 / NCIMB 8826 / WCFS1) (Lactobacillus plantarum) protein is GTPase Obg.